Consider the following 571-residue polypeptide: Urease subunit alpha (571 aa).

The Urease domain occupies 134–571; the sequence is GAIDTHIHFI…LPMAQRYFLF (438 aa). Residues histidine 139, histidine 141, and lysine 222 each contribute to the Ni(2+) site. The residue at position 222 (lysine 222) is an N6-carboxylysine. Histidine 224 is a binding site for substrate. Ni(2+) is bound by residues histidine 251 and histidine 277. The active-site Proton donor is the histidine 325. Position 365 (aspartate 365) interacts with Ni(2+).

This sequence belongs to the metallo-dependent hydrolases superfamily. Urease alpha subunit family. In terms of assembly, heterotrimer of UreA (gamma), UreB (beta) and UreC (alpha) subunits. Three heterotrimers associate to form the active enzyme. Ni cation serves as cofactor. Carboxylation allows a single lysine to coordinate two nickel ions.

It localises to the cytoplasm. The enzyme catalyses urea + 2 H2O + H(+) = hydrogencarbonate + 2 NH4(+). Its pathway is nitrogen metabolism; urea degradation; CO(2) and NH(3) from urea (urease route): step 1/1. The polypeptide is Urease subunit alpha (Bordetella bronchiseptica (strain ATCC BAA-588 / NCTC 13252 / RB50) (Alcaligenes bronchisepticus)).